Reading from the N-terminus, the 172-residue chain is Small ribosomal subunit protein uS5 (172 aa).

In terms of domain architecture, S5 DRBM spans 16 to 79 (LKEKLVHINR…EDGKKNVIKV (64 aa)).

It belongs to the universal ribosomal protein uS5 family. In terms of assembly, part of the 30S ribosomal subunit. Contacts proteins S4 and S8.

With S4 and S12 plays an important role in translational accuracy. Its function is as follows. Located at the back of the 30S subunit body where it stabilizes the conformation of the head with respect to the body. In Pelodictyon phaeoclathratiforme (strain DSM 5477 / BU-1), this protein is Small ribosomal subunit protein uS5.